The primary structure comprises 293 residues: Proximal tail tube connector protein (293 aa).

Residues 104-240 are disordered; the sequence is TRLNTTGNKK…NANTTTNDKL (137 aa). 3 stretches are compositionally biased toward basic and acidic residues: residues 112-123, 130-140, and 162-173; these read KKNDTERNDNRD, ADGKSNTKTSD, and NFNRKIDSDQPD. Polar residues predominate over residues 174-184; the sequence is SRLNLTTNDGQ. A compositionally biased stretch (low complexity) spans 196–238; it reads NNTNNKRNTTGTNNVTSSAESESTGSGTSDTVTTDNANTTTND.

This sequence belongs to the phi29likevirus proximal tail tube connector protein family.

Its subcellular location is the virion. In terms of biological role, forms the proximal part of the tail tube. This Bacillus subtilis (Bacteriophage B103) protein is Proximal tail tube connector protein (11).